The sequence spans 107 residues: Histone H4 (107 aa).

The span at 1–16 shows a compositional bias: gly residues; the sequence is MPGRGKGGKGGKGYGK. Residues 1–23 form a disordered region; the sequence is MPGRGKGGKGGKGYGKVGAKRHA. The DNA-binding element occupies 17–21; that stretch reads VGAKR.

It belongs to the histone H4 family. In terms of assembly, the nucleosome is a histone octamer containing two molecules each of H2A, H2B, H3 and H4 assembled in one H3-H4 heterotetramer and two H2A-H2B heterodimers. The octamer wraps approximately 147 bp of DNA.

The protein resides in the nucleus. Its subcellular location is the chromosome. Its function is as follows. Core component of nucleosome. Nucleosomes wrap and compact DNA into chromatin, limiting DNA accessibility to the cellular machineries which require DNA as a template. Histones thereby play a central role in transcription regulation, DNA repair, DNA replication and chromosomal stability. DNA accessibility is regulated via a complex set of post-translational modifications of histones, also called histone code, and nucleosome remodeling. In Euplotes crassus, this protein is Histone H4.